A 496-amino-acid chain; its full sequence is Genome polyprotein (496 aa).

Topologically, residues 1–447 are extracellular; it reads SRCTHLENRD…HTVLGGAFNS (447 aa). Cystine bridges form between cysteine 3–cysteine 30, cysteine 60–cysteine 116, cysteine 60–cysteine 121, cysteine 74–cysteine 105, cysteine 92–cysteine 116, and cysteine 92–cysteine 121. Residues 98–111 form a fusion peptide region; the sequence is DRGWGNHCGLFGKG. N-linked (GlcNAc...) asparagine; by host glycosylation occurs at asparagine 154. Intrachain disulfides connect cysteine 186–cysteine 290 and cysteine 307–cysteine 338. A helical membrane pass occupies residues 448–468; the sequence is IFGGVGFLPKLLMGVALAWLG. Topologically, residues 469 to 479 are cytoplasmic; that stretch reads LNTRNPTMSMS. A helical transmembrane segment spans residues 480-496; that stretch reads FLLAGGLVLAMTLGVGA.

As to quaternary structure, homodimer; in the endoplasmic reticulum and Golgi. Post-translationally, N-glycosylated.

The protein resides in the virion membrane. Its subcellular location is the host endoplasmic reticulum membrane. Binds to host cell surface receptor and mediates fusion between viral and cellular membranes. Envelope protein is synthesized in the endoplasmic reticulum in the form of heterodimer with protein prM. They play a role in virion budding in the ER, and the newly formed immature particle is covered with 60 spikes composed of heterodimer between precursor prM and envelope protein E. The virion is transported to the Golgi apparatus where the low pH causes dissociation of PrM-E heterodimers and formation of E homodimers. prM-E cleavage is ineficient, and many virions are only partially matured. These uncleaved prM would play a role in immune evasion. The sequence is that of Genome polyprotein from Bos taurus (Bovine).